Reading from the N-terminus, the 772-residue chain is Endoplasmic reticulum membrane sensor NFE2L1 (772 aa).

The helical; Signal-anchor for type II membrane protein transmembrane segment at 7 to 24 (YFTEGLIQFTILLSLIGV) threads the bilayer. The interval 191–199 (IFDYSHRQK) is cholesterol recognition/amino acid consensus (CRAC) region. A compositionally biased stretch (basic and acidic residues) spans 198 to 216 (QKESEVDKELSDGRERGDG). Positions 198-223 (QKESEVDKELSDGRERGDGWRSAGGQ) are disordered. N-linked (GlcNAc...) asparagine glycosylation is found at N332, N340, N362, N402, N407, N414, N425, and N429. The disordered stretch occupies residues 472–531 (EEEFDSDSGLSLDSGHSPASLSSSEASSSSSSSSSSSSSSSSSSSSFSEEGAVGYSSDSE). A compositionally biased stretch (low complexity) spans 478–519 (DSGLSLDSGHSPASLSSSEASSSSSSSSSSSSSSSSSSSSFS). Residue N574 is glycosylated (N-linked (GlcNAc...) asparagine). The tract at residues 581 to 613 (PGTLDPEEPKLPSVGKKSSKEKPSEFLDKQMSR) is disordered. Residues 598-613 (SSKEKPSEFLDKQMSR) are compositionally biased toward basic and acidic residues. One can recognise a bZIP domain in the interval 654–717 (LIRDIRRRGK…RQMKQKVQNL (64 aa)). The interval 656–675 (RDIRRRGKNKMAAQNCRKRK) is basic motif. The tract at residues 682–696 (LERDVEDLQRDKSKL) is leucine-zipper. The Nuclear localization signal motif lies at 761–768 (RRQERKQK).

It belongs to the bZIP family. CNC subfamily. In terms of assembly, interacts (via the bZIP domain) with small MAF protein (MAFF, MAFG or MAFK); required for binding to antioxidant response elements (AREs) on DNA. In terms of processing, cleaved at Leu-104 following retrotranslocation, releasing the protein from the endoplasmic reticulum membrane and forming the transcription factor NRF1 that translocates into the nucleus.

Its subcellular location is the endoplasmic reticulum membrane. It is found in the nucleus. In terms of biological role, endoplasmic reticulum membrane sensor that translocates into the nucleus in response to various stresses to act as a transcription factor. Constitutes a precursor of the transcription factor NRF1. Able to detect various cellular stresses, such as cholesterol excess, oxidative stress or proteasome inhibition. In response to stress, it is released from the endoplasmic reticulum membrane following cleavage and translocates into the nucleus to form the transcription factor NRF1. Acts as a key sensor of cholesterol excess: in excess cholesterol conditions, the endoplasmic reticulum membrane form of the protein directly binds cholesterol via its CRAC motif, preventing cleavage and release of the transcription factor NRF1, thereby allowing expression of genes promoting cholesterol removal. Involved in proteasome homeostasis: in response to proteasome inhibition, it is released from the endoplasmic reticulum membrane, translocates to the nucleus and activates expression of genes encoding proteasome subunits. CNC-type bZIP family transcription factor that translocates to the nucleus and regulates expression of target genes in response to various stresses. Heterodimerizes with small-Maf proteins (MAFF, MAFG or MAFK) and binds DNA motifs including the antioxidant response elements (AREs), which regulate expression of genes involved in oxidative stress response. Activates or represses expression of target genes, depending on the context. Plays a key role in cholesterol homeostasis by acting as a sensor of cholesterol excess: in low cholesterol conditions, translocates into the nucleus and represses expression of genes involved in defense against cholesterol excess. In excess cholesterol conditions, the endoplasmic reticulum membrane form of the protein directly binds cholesterol via its CRAC motif, preventing cleavage and release of the transcription factor NRF1, thereby allowing expression of genes promoting cholesterol removal. Critical for redox balance in response to oxidative stress: acts by binding the AREs motifs on promoters and mediating activation of oxidative stress response genes. Involved in proteasome homeostasis: in response to proteasome inhibition, mediates the 'bounce-back' of proteasome subunits by translocating into the nucleus and activating expression of genes encoding proteasome subunits. This chain is Endoplasmic reticulum membrane sensor NFE2L1, found in Gallus gallus (Chicken).